Reading from the N-terminus, the 365-residue chain is tRNA/tmRNA (uracil-C(5))-methyltransferase (365 aa).

5 residues coordinate S-adenosyl-L-methionine: Gln-189, Tyr-217, Asn-222, Glu-238, and Asp-298. The active-site Nucleophile is the Cys-323. Glu-357 acts as the Proton acceptor in catalysis.

It belongs to the class I-like SAM-binding methyltransferase superfamily. RNA M5U methyltransferase family. TrmA subfamily.

It carries out the reaction uridine(54) in tRNA + S-adenosyl-L-methionine = 5-methyluridine(54) in tRNA + S-adenosyl-L-homocysteine + H(+). It catalyses the reaction uridine(341) in tmRNA + S-adenosyl-L-methionine = 5-methyluridine(341) in tmRNA + S-adenosyl-L-homocysteine + H(+). In terms of biological role, dual-specificity methyltransferase that catalyzes the formation of 5-methyluridine at position 54 (m5U54) in all tRNAs, and that of position 341 (m5U341) in tmRNA (transfer-mRNA). This chain is tRNA/tmRNA (uracil-C(5))-methyltransferase, found in Shewanella loihica (strain ATCC BAA-1088 / PV-4).